The chain runs to 131 residues: MAGTKPGDLGQVKVGQYVVIDGIACRVMDTAHSKPGKHGGAKVRMVAVGIFEPVKKEYVGPAGSRIDIPLIDKRKGQVLALMGDQVQIMDMESFETLEIPMPEDVEGIESGAEVEYFEAMDRYKITRVIGK.

Lysine 37 is subject to Hypusine.

The protein belongs to the eIF-5A family.

It is found in the cytoplasm. Functions by promoting the formation of the first peptide bond. This Methanococcus vannielii (strain ATCC 35089 / DSM 1224 / JCM 13029 / OCM 148 / SB) protein is Translation initiation factor 5A (eIF5A).